Consider the following 514-residue polypeptide: Cytochrome P450 monooxygenase FUS8 (514 aa).

A helical membrane pass occupies residues 28–48 (LTVTKAVGAFIVLFIIIPKVF). Residues N225 and N443 are each glycosylated (N-linked (GlcNAc...) asparagine). C460 contributes to the heme binding site.

The protein belongs to the cytochrome P450 family. Heme serves as cofactor.

The protein resides in the membrane. Its pathway is mycotoxin biosynthesis. Its function is as follows. Cytochrome P450 monooxygenase; part of the gene cluster that mediates the biosynthesis of the mycotoxin fusarin C. Within the cluster, FUS1, FUS2, FUS8 and FUS9 are sufficient for fusarin production. The roles of the other FUS members are yet undetermined. The fusarin C synthetase FUS1 is responsible for the condensation of one acetyl-coenzyme A (CoA) unit with six malonyl-CoA units and the amide linkage of the arising heptaketide and homoserine, subsequently releasing the first intermediate, prefusarin, as an alcohol with an open ring structure. The cytochrome P450 monooxygenase FUS8 participates in multiple oxidation processes at carbon C-20 and is able to use the FUS1 product as substrate, resulting in formation of 20-hydroxy-prefusarin. This reaction seems to be essential before the 2-pyrrolidone ring closure can be catalyzed by FUS2, generating 20-hydroxy-fusarin. FUS8 is able to further oxidizes carbon C-20 after ring closure, resulting in the formation of carboxy-fusarin C. As the last step, FUS9 methylates the hydroxyl group at C-21 to generate fusarin C. Fusarin C can then rearrange to epi-fusarin C, the (z)-isomers, and fusarin A and fusarin D. This chain is Cytochrome P450 monooxygenase FUS8, found in Gibberella moniliformis (strain M3125 / FGSC 7600) (Maize ear and stalk rot fungus).